Consider the following 291-residue polypeptide: U7 snRNA-associated Sm-like protein LSm11 (291 aa).

The segment at 55–84 (ARGRARGAQRGQSRGPGGKRKGRKPEPDPE) is disordered. The 76-residue stretch at 124 to 199 (SPLGELNRCV…LTLTRLFDRL (76 aa)) folds into the Sm domain. An SM region spans residues 155 to 289 (GFIVAFDKFW…RGENVLLVHI (135 aa)). Positions 203 to 266 (EPGSHDPAKG…RRNRKEKVDY (64 aa)) are disordered. Basic residues predominate over residues 251-261 (NRPKQRRRNRK).

The protein belongs to the snRNP Sm proteins family. Component of the heptameric ring U7 snRNP complex.

It localises to the nucleus. Component of the U7 snRNP complex that is involved in the histone 3'-end pre-mRNA processing. Increases U7 snRNA levels but not histone 3'-end pre-mRNA processing activity, when overexpressed. Binds specifically to the Sm-binding site of U7 snRNA. In Xenopus laevis (African clawed frog), this protein is U7 snRNA-associated Sm-like protein LSm11.